Reading from the N-terminus, the 189-residue chain is Large ribosomal subunit protein uL6 (189 aa).

Belongs to the universal ribosomal protein uL6 family. In terms of assembly, part of the 50S ribosomal subunit.

This protein binds to the 23S rRNA, and is important in its secondary structure. It is located near the subunit interface in the base of the L7/L12 stalk, and near the tRNA binding site of the peptidyltransferase center. In Bacteroides thetaiotaomicron (strain ATCC 29148 / DSM 2079 / JCM 5827 / CCUG 10774 / NCTC 10582 / VPI-5482 / E50), this protein is Large ribosomal subunit protein uL6.